Consider the following 69-residue polypeptide: Cytochrome c oxidase subunit 8A, mitochondrial (69 aa).

The transit peptide at 1-25 (MSVLTPLLLRGLTGSARRLPVPCAR) directs the protein to the mitochondrion. The short motif at 2–19 (SVLTPLLLRGLTGSARRL) is the SIFI-degron element. At 26-36 (VHSKPPREQLG) the chain is on the mitochondrial matrix side. Residues 37–60 (TMDIAIGLTSCFVCFLLPSGWVLS) form a helical membrane-spanning segment. Residues 61 to 69 (HLENYKKRE) lie on the Mitochondrial intermembrane side of the membrane.

This sequence belongs to the cytochrome c oxidase VIII family. As to quaternary structure, component of the cytochrome c oxidase (complex IV, CIV), a multisubunit enzyme composed of 14 subunits. The complex is composed of a catalytic core of 3 subunits MT-CO1, MT-CO2 and MT-CO3, encoded in the mitochondrial DNA, and 11 supernumerary subunits COX4I, COX5A, COX5B, COX6A, COX6B, COX6C, COX7A, COX7B, COX7C, COX8 and NDUFA4, which are encoded in the nuclear genome. The complex exists as a monomer or a dimer and forms supercomplexes (SCs) in the inner mitochondrial membrane with NADH-ubiquinone oxidoreductase (complex I, CI) and ubiquinol-cytochrome c oxidoreductase (cytochrome b-c1 complex, complex III, CIII), resulting in different assemblies (supercomplex SCI(1)III(2)IV(1) and megacomplex MCI(2)III(2)IV(2)). Post-translationally, in response to mitochondrial stress, the precursor protein is ubiquitinated by the SIFI complex in the cytoplasm before mitochondrial import, leading to its degradation. Within the SIFI complex, UBR4 initiates ubiquitin chain that are further elongated or branched by KCMF1.

It is found in the mitochondrion inner membrane. Its pathway is energy metabolism; oxidative phosphorylation. Functionally, component of the cytochrome c oxidase, the last enzyme in the mitochondrial electron transport chain which drives oxidative phosphorylation. The respiratory chain contains 3 multisubunit complexes succinate dehydrogenase (complex II, CII), ubiquinol-cytochrome c oxidoreductase (cytochrome b-c1 complex, complex III, CIII) and cytochrome c oxidase (complex IV, CIV), that cooperate to transfer electrons derived from NADH and succinate to molecular oxygen, creating an electrochemical gradient over the inner membrane that drives transmembrane transport and the ATP synthase. Cytochrome c oxidase is the component of the respiratory chain that catalyzes the reduction of oxygen to water. Electrons originating from reduced cytochrome c in the intermembrane space (IMS) are transferred via the dinuclear copper A center (CU(A)) of subunit 2 and heme A of subunit 1 to the active site in subunit 1, a binuclear center (BNC) formed by heme A3 and copper B (CU(B)). The BNC reduces molecular oxygen to 2 water molecules using 4 electrons from cytochrome c in the IMS and 4 protons from the mitochondrial matrix. The polypeptide is Cytochrome c oxidase subunit 8A, mitochondrial (COX8A) (Otolemur crassicaudatus (Brown greater galago)).